The following is a 368-amino-acid chain: tRNA-cytidine(32) 2-sulfurtransferase (368 aa).

The short motif at 95-100 (SGGKDS) is the PP-loop motif element. Residues Cys-170, Cys-173, and Cys-261 each contribute to the [4Fe-4S] cluster site.

This sequence belongs to the TtcA family. As to quaternary structure, homodimer. Mg(2+) is required as a cofactor. The cofactor is [4Fe-4S] cluster.

It localises to the cytoplasm. The catalysed reaction is cytidine(32) in tRNA + S-sulfanyl-L-cysteinyl-[cysteine desulfurase] + AH2 + ATP = 2-thiocytidine(32) in tRNA + L-cysteinyl-[cysteine desulfurase] + A + AMP + diphosphate + H(+). It functions in the pathway tRNA modification. Its function is as follows. Catalyzes the ATP-dependent 2-thiolation of cytidine in position 32 of tRNA, to form 2-thiocytidine (s(2)C32). The sulfur atoms are provided by the cysteine/cysteine desulfurase (IscS) system. The polypeptide is tRNA-cytidine(32) 2-sulfurtransferase (Psychrobacter sp. (strain PRwf-1)).